Reading from the N-terminus, the 38-residue chain is Photosystem II reaction center protein L (38 aa).

Residues 17–37 traverse the membrane as a helical segment; that stretch reads SLFWGLLLIFVLAILFSNYFF.

It belongs to the PsbL family. In terms of assembly, PSII is composed of 1 copy each of membrane proteins PsbA, PsbB, PsbC, PsbD, PsbE, PsbF, PsbH, PsbI, PsbJ, PsbK, PsbL, PsbM, PsbT, PsbX, PsbY, PsbZ, Psb30/Ycf12, at least 3 peripheral proteins of the oxygen-evolving complex and a large number of cofactors. It forms dimeric complexes.

It is found in the plastid. Its subcellular location is the chloroplast thylakoid membrane. In terms of biological role, one of the components of the core complex of photosystem II (PSII). PSII is a light-driven water:plastoquinone oxidoreductase that uses light energy to abstract electrons from H(2)O, generating O(2) and a proton gradient subsequently used for ATP formation. It consists of a core antenna complex that captures photons, and an electron transfer chain that converts photonic excitation into a charge separation. This subunit is found at the monomer-monomer interface and is required for correct PSII assembly and/or dimerization. The sequence is that of Photosystem II reaction center protein L from Chara vulgaris (Common stonewort).